The following is a 443-amino-acid chain: ATP-dependent protease ATPase subunit HslU (443 aa).

ATP is bound by residues isoleucine 18, 60-65 (GVGKTE), aspartate 256, glutamate 321, and arginine 393.

This sequence belongs to the ClpX chaperone family. HslU subfamily. As to quaternary structure, a double ring-shaped homohexamer of HslV is capped on each side by a ring-shaped HslU homohexamer. The assembly of the HslU/HslV complex is dependent on binding of ATP.

Its subcellular location is the cytoplasm. In terms of biological role, ATPase subunit of a proteasome-like degradation complex; this subunit has chaperone activity. The binding of ATP and its subsequent hydrolysis by HslU are essential for unfolding of protein substrates subsequently hydrolyzed by HslV. HslU recognizes the N-terminal part of its protein substrates and unfolds these before they are guided to HslV for hydrolysis. The protein is ATP-dependent protease ATPase subunit HslU of Pasteurella multocida (strain Pm70).